Here is a 393-residue protein sequence, read N- to C-terminus: Flavohemoprotein (393 aa).

One can recognise a Globin domain in the interval 1-139 (MLSAEHRAIV…LADLLIGLEE (139 aa)). His-85 is a binding site for heme b. Residues Tyr-95 and Glu-138 each act as charge relay system in the active site. The reductase stretch occupies residues 150–393 (GGWRGTRAFV…EFFGPASALD (244 aa)). Positions 153–256 (RGTRAFVVAR…LTPSGDFTLE (104 aa)) constitute an FAD-binding FR-type domain. FAD-binding positions include Tyr-191 and 205 to 208 (RNYS). 268 to 273 (GVGITP) provides a ligand contact to NADP(+). An FAD-binding site is contributed by 385-388 (FFGP).

The protein belongs to the globin family. Two-domain flavohemoproteins subfamily. This sequence in the C-terminal section; belongs to the flavoprotein pyridine nucleotide cytochrome reductase family. The cofactor is heme b. It depends on FAD as a cofactor.

The enzyme catalyses 2 nitric oxide + NADPH + 2 O2 = 2 nitrate + NADP(+) + H(+). It carries out the reaction 2 nitric oxide + NADH + 2 O2 = 2 nitrate + NAD(+) + H(+). In terms of biological role, is involved in NO detoxification in an aerobic process, termed nitric oxide dioxygenase (NOD) reaction that utilizes O(2) and NAD(P)H to convert NO to nitrate, which protects the bacterium from various noxious nitrogen compounds. Therefore, plays a central role in the inducible response to nitrosative stress. This Burkholderia sp. (strain TH2) protein is Flavohemoprotein.